The sequence spans 300 residues: uncharacterized protein (300 aa).

8 consecutive transmembrane segments (helical) span residues 13–35 (LLCIFSQCLFGILYLFSIWLQPL), 45–67 (MLTMIFGLLLILFPTIGCRSLLS), 80–102 (WVLFLLGTLDAGSQFWLFMWAPL), 106–128 (GINIAMGYFLFPLIMAVLGWAWL), 180–202 (IPALQGITLDIILISIPCFIYIL), 217–236 (YWLLLPALGIVSAISLSANL), 243–265 (PVSIFAVLSYIEPILLFLIAVFV), and 275–294 (YFTYVPIWLSLIVIGIEGLL).

It belongs to the EamA transporter family.

It localises to the cell membrane. This is an uncharacterized protein from Haemophilus influenzae (strain ATCC 51907 / DSM 11121 / KW20 / Rd).